Reading from the N-terminus, the 245-residue chain is Myozenin-3 (245 aa).

Ser-31 bears the Phosphoserine mark. The binding to ACTN2, PPP3CA and TCAP stretch occupies residues Leu-50–Ser-67. The tract at residues Ser-67–Gln-108 is binding to FLNC. Positions Asn-93 to Ala-134 are disordered. The tract at residues Pro-180–Arg-201 is binding to ACTN2.

Belongs to the myozenin family. As to quaternary structure, interacts with ACTN2, LDB3, FLNC, PPP3CA and TCAP. As to expression, expressed specifically in skeletal muscle and is enriched in fast-twitch muscle fibers. Not detected in heart.

It localises to the cytoplasm. The protein localises to the myofibril. Its subcellular location is the sarcomere. It is found in the z line. In terms of biological role, myozenins may serve as intracellular binding proteins involved in linking Z line proteins such as alpha-actinin, gamma-filamin, TCAP/telethonin, LDB3/ZASP and localizing calcineurin signaling to the sarcomere. Plays an important role in the modulation of calcineurin signaling. May play a role in myofibrillogenesis. This is Myozenin-3 from Mus musculus (Mouse).